A 104-amino-acid chain; its full sequence is Probable RNA-binding protein PA4753 (104 aa).

One can recognise a CRM domain in the interval 1-97 (MALTQEQKKQ…NPKPNKNLSN (97 aa)).

This Pseudomonas aeruginosa (strain ATCC 15692 / DSM 22644 / CIP 104116 / JCM 14847 / LMG 12228 / 1C / PRS 101 / PAO1) protein is Probable RNA-binding protein PA4753.